Reading from the N-terminus, the 192-residue chain is ATP-dependent Clp protease proteolytic subunit 1 (192 aa).

The active-site Nucleophile is the Ser-92. His-117 is an active-site residue.

The protein belongs to the peptidase S14 family. As to quaternary structure, fourteen ClpP subunits assemble into 2 heptameric rings which stack back to back to give a disk-like structure with a central cavity, resembling the structure of eukaryotic proteasomes.

Its subcellular location is the cytoplasm. It catalyses the reaction Hydrolysis of proteins to small peptides in the presence of ATP and magnesium. alpha-casein is the usual test substrate. In the absence of ATP, only oligopeptides shorter than five residues are hydrolyzed (such as succinyl-Leu-Tyr-|-NHMec, and Leu-Tyr-Leu-|-Tyr-Trp, in which cleavage of the -Tyr-|-Leu- and -Tyr-|-Trp bonds also occurs).. In terms of biological role, cleaves peptides in various proteins in a process that requires ATP hydrolysis. Has a chymotrypsin-like activity. Plays a major role in the degradation of misfolded proteins. In Chlamydia trachomatis serovar D (strain ATCC VR-885 / DSM 19411 / UW-3/Cx), this protein is ATP-dependent Clp protease proteolytic subunit 1.